The chain runs to 365 residues: 2-aminoethylphosphonate--pyruvate transaminase (365 aa).

Position 194 is an N6-(pyridoxal phosphate)lysine (Lys-194).

Belongs to the class-V pyridoxal-phosphate-dependent aminotransferase family. PhnW subfamily. Homodimer. The cofactor is pyridoxal 5'-phosphate.

It catalyses the reaction (2-aminoethyl)phosphonate + pyruvate = phosphonoacetaldehyde + L-alanine. Functionally, involved in phosphonate degradation. The sequence is that of 2-aminoethylphosphonate--pyruvate transaminase from Bacillus thuringiensis (strain Al Hakam).